The primary structure comprises 143 residues: Nucleoside diphosphate kinase (143 aa).

Residues lysine 11, phenylalanine 59, arginine 87, threonine 93, arginine 104, and asparagine 114 each contribute to the ATP site. The active-site Pros-phosphohistidine intermediate is the histidine 117.

This sequence belongs to the NDK family. As to quaternary structure, homotetramer. Mg(2+) serves as cofactor.

The protein localises to the cytoplasm. The catalysed reaction is a 2'-deoxyribonucleoside 5'-diphosphate + ATP = a 2'-deoxyribonucleoside 5'-triphosphate + ADP. It catalyses the reaction a ribonucleoside 5'-diphosphate + ATP = a ribonucleoside 5'-triphosphate + ADP. Major role in the synthesis of nucleoside triphosphates other than ATP. The ATP gamma phosphate is transferred to the NDP beta phosphate via a ping-pong mechanism, using a phosphorylated active-site intermediate. In Sodalis glossinidius (strain morsitans), this protein is Nucleoside diphosphate kinase.